The following is a 361-amino-acid chain: Probable dual-specificity RNA methyltransferase RlmN (361 aa).

Glutamate 91 functions as the Proton acceptor in the catalytic mechanism. The region spanning 97-329 is the Radical SAM core domain; sequence QHYGLSVCVT…KKKGGNCVVR (233 aa). Cysteine 104 and cysteine 340 are disulfide-bonded. 3 residues coordinate [4Fe-4S] cluster: cysteine 111, cysteine 115, and cysteine 118. S-adenosyl-L-methionine is bound by residues 163-164, serine 195, 218-220, and asparagine 296; these read GE and SLH. The S-methylcysteine intermediate role is filled by cysteine 340.

This sequence belongs to the radical SAM superfamily. RlmN family. [4Fe-4S] cluster serves as cofactor.

It localises to the cytoplasm. The catalysed reaction is adenosine(2503) in 23S rRNA + 2 reduced [2Fe-2S]-[ferredoxin] + 2 S-adenosyl-L-methionine = 2-methyladenosine(2503) in 23S rRNA + 5'-deoxyadenosine + L-methionine + 2 oxidized [2Fe-2S]-[ferredoxin] + S-adenosyl-L-homocysteine. It carries out the reaction adenosine(37) in tRNA + 2 reduced [2Fe-2S]-[ferredoxin] + 2 S-adenosyl-L-methionine = 2-methyladenosine(37) in tRNA + 5'-deoxyadenosine + L-methionine + 2 oxidized [2Fe-2S]-[ferredoxin] + S-adenosyl-L-homocysteine. Functionally, specifically methylates position 2 of adenine 2503 in 23S rRNA and position 2 of adenine 37 in tRNAs. This is Probable dual-specificity RNA methyltransferase RlmN from Streptococcus pneumoniae (strain P1031).